Here is a 365-residue protein sequence, read N- to C-terminus: Galactoside alpha-(1,2)-fucosyltransferase 1 (365 aa).

Topologically, residues 1–8 (MWPLSHRH) are cytoplasmic. A helical; Signal-anchor for type II membrane protein membrane pass occupies residues 9–25 (LCLAFLLVCVLSAISFF). Residues 26–365 (LHIYQDSIRH…LSSLWTLAEP (340 aa)) lie on the Lumenal side of the membrane. Asn-65, Asn-301, and Asn-327 each carry an N-linked (GlcNAc...) asparagine glycan.

This sequence belongs to the glycosyltransferase 11 family.

The protein resides in the golgi apparatus. The protein localises to the golgi stack membrane. The enzyme catalyses a beta-D-galactosyl-(1-&gt;4)-N-acetyl-beta-D-glucosaminyl derivative + GDP-beta-L-fucose = an alpha-L-Fuc-(1-&gt;2)-beta-D-Gal-(1-&gt;4)-beta-D-GlcNAc derivative + GDP + H(+). It carries out the reaction a ganglioside GA1 + GDP-beta-L-fucose = a ganglioside Fuc-GA1 + GDP + H(+). The catalysed reaction is a beta-D-Gal-(1-&gt;3)-beta-D-GlcNAc-(1-&gt;3)-beta-D-Gal-(1-&gt;4)-beta-D-Glc-(1&lt;-&gt;1')-Cer(d18:1(4E)) + GDP-beta-L-fucose = alpha-L-fucosyl-(1-&gt;2)- beta-D-galactosyl-(1-&gt;3)-N-acetyl-beta-D-glucosaminyl-(1-&gt;3)-beta-D-galactosyl-(1-&gt;4)-beta-D-glucosyl-(1&lt;-&gt;1')-N-acylsphing-4-enine + GDP + H(+). It catalyses the reaction a neolactoside nLc4Cer(d18:1(4E)) + GDP-beta-L-fucose = a neolactoside IV(2)-alpha-Fuc-nLc4Cer(d18:1(4E)) + GDP + H(+). The enzyme catalyses a ganglioside GM1 + GDP-beta-L-fucose = a ganglioside Fuc-GM1 + GDP + H(+). It carries out the reaction beta-D-galactosyl-(1-&gt;3)-N-acetyl-D-galactosamine + GDP-beta-L-fucose = alpha-L-fucosyl-(1-&gt;2)-beta-D-galactosyl-(1-&gt;3)-N-acetyl-D-galactosamine + GDP + H(+). It participates in protein modification; protein glycosylation. Catalyzes the transfer of L-fucose, from a guanosine diphosphate-beta-L-fucose, to the terminal galactose residue of glycoconjugates through an alpha(1,2) linkage leading to H antigen synthesis that is an intermediate substrate in the synthesis of ABO blood group antigens. H antigen is essential for maturation of the glomerular layer of the main olfactory bulb, in cell migration and early cell-cell contacts during tumor associated angiogenesis. Preferentially fucosylates soluble lactose and to a lesser extent fucosylates glycolipids gangliosides GA1 and GM1a. This is Galactoside alpha-(1,2)-fucosyltransferase 1 from Leontocebus fuscicollis (Brown-mantled tamarin).